We begin with the raw amino-acid sequence, 444 residues long: Tol-Pal system protein TolB (444 aa).

Residues 1-26 form the signal peptide; the sequence is MTLFRTLAPMGLALALLLPAAVPAAA. Positions 281–310 are enriched in polar residues; it reads IYTLDTGSGTRRQLTNSPSIETAPSYSPDG. The interval 281-311 is disordered; the sequence is IYTLDTGSGTRRQLTNSPSIETAPSYSPDGS.

This sequence belongs to the TolB family. The Tol-Pal system is composed of five core proteins: the inner membrane proteins TolA, TolQ and TolR, the periplasmic protein TolB and the outer membrane protein Pal. They form a network linking the inner and outer membranes and the peptidoglycan layer.

The protein resides in the periplasm. Its function is as follows. Part of the Tol-Pal system, which plays a role in outer membrane invagination during cell division and is important for maintaining outer membrane integrity. The polypeptide is Tol-Pal system protein TolB (Cereibacter sphaeroides (strain ATCC 17029 / ATH 2.4.9) (Rhodobacter sphaeroides)).